Consider the following 1798-residue polypeptide: Non-reducing polyketide synthase nscA (1798 aa).

The interval 25–256 (RRLDQHSKDR…PLPVYDGLCH (232 aa)) is N-terminal acylcarrier protein transacylase domain (SAT). In terms of domain architecture, Ketosynthase family 3 (KS3) spans 392 to 825 (SSKLAIVGMA…GGNTTLLLED (434 aa)). Residues 436-455 (NTHYDPTGKTENTTQTPYGN) form a disordered region. Residues 444 to 453 (KTENTTQTPY) are compositionally biased toward polar residues. Residues C565, H700, and H743 each act as for beta-ketoacyl synthase activity in the active site. The interval 931–1230 (FTGQGAYYHG…PSASAMSSCR (300 aa)) is malonyl-CoA:ACP transacylase (MAT) domain. The interval 1322–1458 (HQITAETVEA…AMIRFEDPVA (137 aa)) is N-terminal hotdog fold. The 311-residue stretch at 1322–1632 (HQITAETVEA…FRRVPRLLMD (311 aa)) folds into the PKS/mFAS DH domain. H1354 functions as the Proton acceptor; for dehydratase activity in the catalytic mechanism. The segment at 1390–1628 (HMNLTDVEVL…GMIRFRRVPR (239 aa)) is product template (PT) domain. The interval 1486–1632 (ASRLSKPLAY…FRRVPRLLMD (147 aa)) is C-terminal hotdog fold. D1543 functions as the Proton donor; for dehydratase activity in the catalytic mechanism. The disordered stretch occupies residues 1685-1719 (MASKAPEPAPLLATSSESSTPKESPIVTPAESERA). A compositionally biased stretch (low complexity) spans 1698–1709 (TSSESSTPKESP). Residues 1721-1798 (PVDNNMISQC…EMTAWIEEYC (78 aa)) enclose the Carrier domain. S1758 is modified (O-(pantetheine 4'-phosphoryl)serine).

It depends on pantetheine 4'-phosphate as a cofactor.

It functions in the pathway secondary metabolite biosynthesis. Its function is as follows. Non-reducing polyketide synthase; part of the gene cluster that mediates the biosynthesis of neosartoricin B, a prenylated anthracenone that probably exhibits T-cell antiproliferative activity, suggestive of a physiological role as an immunosuppressive agent. The non-reducing polyketide synthase nscA probably synthesizes and cyclizes the decaketide backbone. The hydrolase nscB then mediates the product release through hydrolysis followed by spontaneous decarboxylation. The prenyltransferase nscD catalyzes the addition of the dimethylallyl group to the aromatic C5. The FAD-dependent monooxygenase nscC is then responsible for the stereospecific hydroxylation at C2. Neosartoricin B can be converted into two additional compounds neosartoricins C and D. Neosartoricin C is a spirocyclic compound that is cyclized through the attack of C3 hydroxyl on C14, followed by dehydration. On the other hand, neosartoricin D is a further cyclized compound in which attack of C2 on C14 in neosartoricin C results in the formation of the acetal-containing dioxabicyclo-octanone ring. Both of these compounds are novel and possibly represent related metabolites of the gene cluster. The protein is Non-reducing polyketide synthase nscA of Arthroderma benhamiae (strain ATCC MYA-4681 / CBS 112371) (Trichophyton mentagrophytes).